The primary structure comprises 668 residues: Potassium-transporting ATPase ATP-binding subunit (668 aa).

4 helical membrane passes run 31–51 (MFLT…PSFF), 62–82 (FYVA…ISTA), 213–233 (TVFL…IFAI), and 243–263 (IVML…ALLP). The 4-aspartylphosphate intermediate role is filled by Asp298. ATP is bound by residues Asp335, Glu339, 367-374 (FSSETKFS), and Lys385. Residues Asp504 and Asp508 each coordinate Mg(2+). A run of 3 helical transmembrane segments spans residues 573-593 (YFVI…VNIL), 599-619 (IVAV…LIPL), and 644-664 (IGGV…LIAW).

This sequence belongs to the cation transport ATPase (P-type) (TC 3.A.3) family. Type IA subfamily. As to quaternary structure, the system is composed of three essential subunits: KdpA, KdpB and KdpC.

Its subcellular location is the cell membrane. It catalyses the reaction K(+)(out) + ATP + H2O = K(+)(in) + ADP + phosphate + H(+). Its function is as follows. Part of the high-affinity ATP-driven potassium transport (or Kdp) system, which catalyzes the hydrolysis of ATP coupled with the electrogenic transport of potassium into the cytoplasm. This subunit is responsible for energy coupling to the transport system and for the release of the potassium ions to the cytoplasm. The protein is Potassium-transporting ATPase ATP-binding subunit of Thermoplasma volcanium (strain ATCC 51530 / DSM 4299 / JCM 9571 / NBRC 15438 / GSS1).